Consider the following 592-residue polypeptide: A-type ATP synthase subunit A (592 aa).

Residue 233 to 240 (GPFGSGKT) coordinates ATP.

The protein belongs to the ATPase alpha/beta chains family. Has multiple subunits with at least A(3), B(3), C, D, E, F, H, I and proteolipid K(x).

It is found in the cell membrane. The enzyme catalyses ATP + H2O + 4 H(+)(in) = ADP + phosphate + 5 H(+)(out). Component of the A-type ATP synthase that produces ATP from ADP in the presence of a proton gradient across the membrane. The A chain is the catalytic subunit. This chain is A-type ATP synthase subunit A, found in Saccharolobus islandicus (strain M.16.27) (Sulfolobus islandicus).